A 223-amino-acid polypeptide reads, in one-letter code: Peptidyl-prolyl cis-trans isomerase FKBP16-3, chloroplastic (223 aa).

Residues 1-36 constitute a chloroplast transit peptide; it reads MAASSPSLLLPLGSASRNGLTTKNPNSSRYIAARVI. Residues 37–76 constitute a thylakoid transit peptide; that stretch reads ASETREQSCKISNLSSRREAMLLVLGVSGGLSMSSLAAYA. A PPIase FKBP-type domain is found at 124–216; the sequence is GFQVAANYVA…IFDVSLEFIP (93 aa).

The protein belongs to the FKBP-type PPIase family.

The protein resides in the plastid. It localises to the chloroplast thylakoid lumen. It carries out the reaction [protein]-peptidylproline (omega=180) = [protein]-peptidylproline (omega=0). Its function is as follows. PPIases accelerate the folding of proteins. It catalyzes the cis-trans isomerization of proline imidic peptide bonds in oligopeptides. This chain is Peptidyl-prolyl cis-trans isomerase FKBP16-3, chloroplastic (FKBP16-3), found in Arabidopsis thaliana (Mouse-ear cress).